A 204-amino-acid polypeptide reads, in one-letter code: NADH-ubiquinone oxidoreductase subunit 9 (204 aa).

This sequence belongs to the complex I 30 kDa subunit family. In terms of assembly, complex I is composed of about 30 different subunits.

Its subcellular location is the mitochondrion inner membrane. It carries out the reaction a ubiquinone + NADH + 5 H(+)(in) = a ubiquinol + NAD(+) + 4 H(+)(out). In terms of biological role, core subunit of the mitochondrial membrane respiratory chain NADH dehydrogenase (Complex I) that is believed to belong to the minimal assembly required for catalysis. Complex I functions in the transfer of electrons from NADH to the respiratory chain. The immediate electron acceptor for the enzyme is believed to be ubiquinone. The polypeptide is NADH-ubiquinone oxidoreductase subunit 9 (NAD9) (Reclinomonas americana).